The primary structure comprises 201 residues: ADP-ribosylation factor-related protein 1 (201 aa).

At methionine 1 the chain carries N-acetylmethionine. GTP-binding positions include 24 to 31, 75 to 79, and 134 to 137; these read GLDNAGKT, DLGGQ, and NKQD.

The protein belongs to the small GTPase superfamily. Arf family. In terms of assembly, interacts with SYS1.

The protein resides in the golgi apparatus. Its subcellular location is the trans-Golgi network. Its function is as follows. Trans-Golgi-associated GTPase that regulates protein sorting. Controls the targeting of ARL1 and its effector to the trans-Golgi. Required for the lipidation of chylomicrons in the intestine and required for VLDL lipidation in the liver. This chain is ADP-ribosylation factor-related protein 1 (ARFRP1), found in Bos taurus (Bovine).